We begin with the raw amino-acid sequence, 97 residues long: Mapk-regulated corepressor-interacting protein 1 (97 aa).

Residues 1–30 (MTSSPVSRVVYNGKRTSSPRSPPSSSEIFT) are disordered. Phosphoserine is present on residues Ser21 and Ser24. Thr30 is modified (phosphothreonine). Position 41 is a phosphotyrosine (Tyr41). N6-acetyllysine is present on Lys79. The PXDLS motif motif lies at 80–84 (PIDLS).

Belongs to the MCRIP family. Interacts (unphosphorylated form, via the PXDLS motif) with CTBP1, competitively inhibiting CTBP-ZEB1 interaction. Interacts with CTBP2. Interacts with MCRIP2. Interacts with DDX6. Phosphorylation by MAPK3/1 (ERK1/2) regulates MCRIP1 binding to CTBP(s).

The protein localises to the nucleus. Its subcellular location is the cytoplasm. It localises to the stress granule. Functionally, the phosphorylation status of MCRIP1 functions as a molecular switch to regulate epithelial-mesenchymal transition. Unphosphorylated MCRIP1 binds to and inhibits the transcriptional corepressor CTBP(s). When phosphorylated by MAPK/ERK, MCRIP1 releases CTBP(s) resulting in transcriptional silencing of the E-cadherin gene and induction of epithelial-mesenchymal transition. This Homo sapiens (Human) protein is Mapk-regulated corepressor-interacting protein 1.